A 451-amino-acid polypeptide reads, in one-letter code: Bifunctional protein GlmU (451 aa).

The pyrophosphorylase stretch occupies residues 1 to 229 (MQRHAIVLAA…FEEIMGVNDR (229 aa)). UDP-N-acetyl-alpha-D-glucosamine contacts are provided by residues 8-11 (LAAG), K22, Q72, and 77-78 (GT). D102 provides a ligand contact to Mg(2+). Residues G139, E154, and N227 each contribute to the UDP-N-acetyl-alpha-D-glucosamine site. Mg(2+) is bound at residue N227. Positions 230–250 (VMLSEAEKAFRKRINEQHMKN) are linker. Residues 251–451 (GVTIIDPVTT…QTTKEGYLKK (201 aa)) form an N-acetyltransferase region. Residues R332 and K350 each contribute to the UDP-N-acetyl-alpha-D-glucosamine site. The active-site Proton acceptor is the H362. The UDP-N-acetyl-alpha-D-glucosamine site is built by Y365 and N376. Acetyl-CoA-binding positions include 385–386 (NY), A422, and R439.

This sequence in the N-terminal section; belongs to the N-acetylglucosamine-1-phosphate uridyltransferase family. The protein in the C-terminal section; belongs to the transferase hexapeptide repeat family. In terms of assembly, homotrimer. The cofactor is Mg(2+).

It is found in the cytoplasm. The enzyme catalyses alpha-D-glucosamine 1-phosphate + acetyl-CoA = N-acetyl-alpha-D-glucosamine 1-phosphate + CoA + H(+). It carries out the reaction N-acetyl-alpha-D-glucosamine 1-phosphate + UTP + H(+) = UDP-N-acetyl-alpha-D-glucosamine + diphosphate. It functions in the pathway nucleotide-sugar biosynthesis; UDP-N-acetyl-alpha-D-glucosamine biosynthesis; N-acetyl-alpha-D-glucosamine 1-phosphate from alpha-D-glucosamine 6-phosphate (route II): step 2/2. It participates in nucleotide-sugar biosynthesis; UDP-N-acetyl-alpha-D-glucosamine biosynthesis; UDP-N-acetyl-alpha-D-glucosamine from N-acetyl-alpha-D-glucosamine 1-phosphate: step 1/1. The protein operates within bacterial outer membrane biogenesis; LPS lipid A biosynthesis. Catalyzes the last two sequential reactions in the de novo biosynthetic pathway for UDP-N-acetylglucosamine (UDP-GlcNAc). The C-terminal domain catalyzes the transfer of acetyl group from acetyl coenzyme A to glucosamine-1-phosphate (GlcN-1-P) to produce N-acetylglucosamine-1-phosphate (GlcNAc-1-P), which is converted into UDP-GlcNAc by the transfer of uridine 5-monophosphate (from uridine 5-triphosphate), a reaction catalyzed by the N-terminal domain. The chain is Bifunctional protein GlmU from Staphylococcus saprophyticus subsp. saprophyticus (strain ATCC 15305 / DSM 20229 / NCIMB 8711 / NCTC 7292 / S-41).